A 227-amino-acid chain; its full sequence is Uracil-DNA glycosylase (227 aa).

Aspartate 68 acts as the Proton acceptor in catalysis.

The protein belongs to the uracil-DNA glycosylase (UDG) superfamily. UNG family.

The protein resides in the cytoplasm. The enzyme catalyses Hydrolyzes single-stranded DNA or mismatched double-stranded DNA and polynucleotides, releasing free uracil.. Functionally, excises uracil residues from the DNA which can arise as a result of misincorporation of dUMP residues by DNA polymerase or due to deamination of cytosine. The protein is Uracil-DNA glycosylase of Mycobacterium avium (strain 104).